Reading from the N-terminus, the 343-residue chain is Arginine-hydroxylase NDUFAF5, mitochondrial (343 aa).

The N-terminal 29 residues, 1-29 (MLRKVVLLRLCPLLGRPAVSASSGSRREV), are a transit peptide targeting the mitochondrion.

This sequence belongs to the methyltransferase superfamily. As to quaternary structure, interacts with NDUFAF8, leading to stabilize NDUFAF5. Interacts with NDUFS7. Interacts with PYURF (via TRM112 domain); the interaction is direct and stabilizes NDUFAF5 protein.

It is found in the mitochondrion inner membrane. In terms of biological role, arginine hydroxylase that mediates hydroxylation of 'Arg-122' of NDUFS7 and is involved in the assembly of mitochondrial NADH:ubiquinone oxidoreductase complex (complex I, MT-ND1) at early stages. May also have methyltransferase activity. The sequence is that of Arginine-hydroxylase NDUFAF5, mitochondrial from Mus musculus (Mouse).